Reading from the N-terminus, the 288-residue chain is MWVRQVPWSFTWAVLQLSWQSGWLLEVPNGPWRSLTFYPAWLTVSEGANATFTCSLSNWSEDLMLNWNRLSPSNQTEKQAAFCNGLSQPVQDARFQIIQLPNRHDFHMNILDTRRNDSGIYLCGAISLHPKAKIEESPGAELVVTERILETSTRYPSPSPKPEGRFQGMVIGIMSALVGIPVLLLLAWALAVFCSTSMSEARGAGSKDDTLKEEPSAAPVPSVAYEELDFQGREKTPELPTACVHTEYATIVFTEGLGASAMGRRGSADGLQGPRPPRHEDGHCSWPL.

A signal peptide spans 1 to 24 (MWVRQVPWSFTWAVLQLSWQSGWL). The Extracellular portion of the chain corresponds to 25–169 (LEVPNGPWRS…PKPEGRFQGM (145 aa)). Residues 31-139 (PWRSLTFYPA…PKAKIEESPG (109 aa)) enclose the Ig-like V-type domain. N-linked (GlcNAc...) asparagine glycosylation is found at Asn-49, Asn-58, Asn-74, and Asn-116. The cysteines at positions 54 and 123 are disulfide-linked. Residues 70 to 77 (LSPSNQTE) form an interaction with CD274/PDCD1L1 region. A helical membrane pass occupies residues 170–190 (VIGIMSALVGIPVLLLLAWAL). Over 191–288 (AVFCSTSMSE…HEDGHCSWPL (98 aa)) the chain is Cytoplasmic. The ITIM motif signature appears at 223–228 (VAYEEL). Tyr-225 carries the post-translational modification Phosphotyrosine. Lys-235 is covalently cross-linked (Glycyl lysine isopeptide (Lys-Gly) (interchain with G-Cter in ubiquitin)). At Thr-236 the chain carries Phosphothreonine; by MAPK3. The ITSM motif motif lies at 247 to 251 (EYATI). Residue Tyr-248 is modified to Phosphotyrosine. The interval 263–288 (GRRGSADGLQGPRPPRHEDGHCSWPL) is disordered. Over residues 277-288 (PRHEDGHCSWPL) the composition is skewed to basic and acidic residues.

In terms of assembly, monomer. Interacts with CD274/PDCD1L1. Interacts with CD273/PDCD1LG2. Interacts with FBXO38; leading to ubiquitination and degradation by the proteasome. Post-translationally, ubiquitinated at Lys-235 by the SCF(FBXO38) complex, leading to its proteasomal degradation. Ubiquitinated via 'Lys-48'-linked polyubiquitin chains. Deubiquitinated and thus stabilized by USP5. Tyrosine phosphorylated at Tyr-225 (within ITIM motif) and Tyr-248 (ITSM motif) upon ligand binding. Phosphorylation at Tyr-248 promotes the recruitment of the protein tyrosine phosphatase PTPN11/SHP-2 that mediates dephosphorylation of key TCR proximal signaling molecules, such as ZAP70, PRKCQ/PKCtheta and CD247/CD3zeta. Phosphorylation at Thr-236 promotes the recruitment of the deubiquitinase USP5. Thymus-specific.

It is found in the cell membrane. Its function is as follows. Inhibitory receptor on antigen activated T-cells that plays a critical role in induction and maintenance of immune tolerance to self. Delivers inhibitory signals upon binding to ligands, such as CD274/PDCD1L1 and CD273/PDCD1LG2. Following T-cell receptor (TCR) engagement, PDCD1 associates with CD3-TCR in the immunological synapse and directly inhibits T-cell activation. Suppresses T-cell activation through the recruitment of PTPN11/SHP-2: following ligand-binding, PDCD1 is phosphorylated within the ITSM motif, leading to the recruitment of the protein tyrosine phosphatase PTPN11/SHP-2 that mediates dephosphorylation of key TCR proximal signaling molecules, such as ZAP70, PRKCQ/PKCtheta and CD247/CD3zeta. The PDCD1-mediated inhibitory pathway is exploited by tumors to attenuate anti-tumor immunity and facilitate tumor survival. This chain is Programmed cell death protein 1, found in Mus musculus (Mouse).